Consider the following 700-residue polypeptide: Elongation factor G (700 aa).

A tr-type G domain is found at 6–286 (HKVRNIGIMA…AVIDYLPSPL (281 aa)). GTP is bound by residues 15 to 22 (AHIDAGKT), 79 to 83 (DTPGH), and 133 to 136 (NKMD).

This sequence belongs to the TRAFAC class translation factor GTPase superfamily. Classic translation factor GTPase family. EF-G/EF-2 subfamily.

It localises to the cytoplasm. In terms of biological role, catalyzes the GTP-dependent ribosomal translocation step during translation elongation. During this step, the ribosome changes from the pre-translocational (PRE) to the post-translocational (POST) state as the newly formed A-site-bound peptidyl-tRNA and P-site-bound deacylated tRNA move to the P and E sites, respectively. Catalyzes the coordinated movement of the two tRNA molecules, the mRNA and conformational changes in the ribosome. This is Elongation factor G from Leifsonia xyli subsp. xyli (strain CTCB07).